A 657-amino-acid chain; its full sequence is Autophagy-related protein 22 (657 aa).

Low complexity predominate over residues 1–15 (MAPNLQPQPQSQLQR). Positions 1–78 (MAPNLQPQPQ…VVPRHFGHDA (78 aa)) are disordered. The Cytoplasmic portion of the chain corresponds to 1-91 (MAPNLQPQPQ…SRRELLGWYA (91 aa)). Polar residues predominate over residues 26–40 (GLSNISKRSFRSCAT). Residues 92 to 112 (YAFAAETYVICGIASFIPILL) traverse the membrane as a helical segment. Topologically, residues 113-155 (ETLARENGVLVSDRKTPCGSSDSKNDGDGQCIVWVFGMEINTA) are vacuolar. The chain crosses the membrane as a helical span at residues 156 to 176 (SFAMYTFSVSVLVQALLVVSI). At 177 to 187 (SCAADHGNYRK) the chain is on the cytoplasmic side. Residues 188 to 208 (KLLLTFAWIGSFAVMSYIFIT) form a helical membrane-spanning segment. The Vacuolar segment spans residues 209-212 (KDNY). Residues 213-233 (ILGALLTVISNTSFGASFVLL) form a helical membrane-spanning segment. Residues 234-317 (NSFLPLLVRY…ELELSTRISA (84 aa)) lie on the Cytoplasmic side of the membrane. Residues 318–338 (IGIGTGYIAALFLQCICIGVL) form a helical membrane-spanning segment. Topologically, residues 339 to 349 (ISLHNTTWGQR) are vacuolar. An N-linked (GlcNAc...) asparagine glycan is attached at asparagine 343. Residues 350–370 (VVLFMVGVWWTVFTIPAAMWL) traverse the membrane as a helical segment. The Cytoplasmic segment spans residues 371–384 (RPRPGPPLADNGRK). A helical membrane pass occupies residues 385–405 (GIMAGLAYILYAWKSLFKTIQ). The Vacuolar portion of the chain corresponds to 406-409 (QARR). A helical membrane pass occupies residues 410-430 (LLDIVLFLAGWFLLSDAIATT). Residues 431-446 (SSTAILFAKTQLHMKP) lie on the Cytoplasmic side of the membrane. The helical transmembrane segment at 447-467 (WALGMINVISTTAGVFGAFGW) threads the bilayer. Residues 468–481 (SWVSRLFNLKAHQT) lie on the Vacuolar side of the membrane. The helical transmembrane segment at 482-502 (ILVCIALFELIPLYGLLGYLP) threads the bilayer. The Cytoplasmic portion of the chain corresponds to 503–515 (FVKNWGVFGLQQP). A helical transmembrane segment spans residues 516-536 (WEMYPLAAVYGVVLGGLSGYC). The Vacuolar portion of the chain corresponds to 537–554 (RSLYGELIPPGSEAAFYA). The helical transmembrane segment at 555–575 (LYAITDKGSSVFGPTIVGAII) threads the bilayer. The Cytoplasmic portion of the chain corresponds to 576–583 (DRTGTIRP). A helical membrane pass occupies residues 584-604 (AFWFLAVLVGFPAPLIWFIDV). The Vacuolar segment spans residues 605–657 (ERGRREGAKLAKSITDSIVQEEDESDDGAERRGMLSDYEREHGQSIDDERAGR). Positions 615–657 (AKSITDSIVQEEDESDDGAERRGMLSDYEREHGQSIDDERAGR) are disordered. Residues 632 to 657 (GAERRGMLSDYEREHGQSIDDERAGR) are compositionally biased toward basic and acidic residues.

It belongs to the ATG22 family.

The protein resides in the vacuole membrane. In terms of biological role, vacuolar effluxer which mediate the efflux of leucine and other amino acids resulting from autophagic degradation. The release of autophagic amino acids allows the maintenance of protein synthesis and viability during nitrogen starvation. Autophagy is required for proper vegetative growth, asexual/sexual reproduction, and full virulence. Autophagy is particularly involved in the biosynthesis of deoxynivalenol (DON), an important virulence determinant. The chain is Autophagy-related protein 22 from Gibberella zeae (strain ATCC MYA-4620 / CBS 123657 / FGSC 9075 / NRRL 31084 / PH-1) (Wheat head blight fungus).